The chain runs to 659 residues: Exoribonuclease 2 (659 aa).

The 344-residue stretch at 189 to 532 (RRDLTALHFV…NHRLIKACLA (344 aa)) folds into the RNB domain. In terms of domain architecture, S1 motif spans 577–659 (NPEFRAEVQD…ETRSLIGNLV (83 aa)).

It belongs to the RNR ribonuclease family. RNase II subfamily.

The protein localises to the cytoplasm. The catalysed reaction is Exonucleolytic cleavage in the 3'- to 5'-direction to yield nucleoside 5'-phosphates.. In terms of biological role, involved in mRNA degradation. Hydrolyzes single-stranded polyribonucleotides processively in the 3' to 5' direction. The sequence is that of Exoribonuclease 2 from Mannheimia succiniciproducens (strain KCTC 0769BP / MBEL55E).